The primary structure comprises 271 residues: MASEFKKKLFWRAVVAEFLAMILFVFISIGSALGFNYPVRNNQTAGAAQDNVKVSLAFGLSIATLAQSVGHISGAHLNPAVTLGLLLSCQISILRAVMYIIAQCVGAIVATAILSGITSSLPDNSLGRNELAPGVNSGQGLGIEIIGTLQLVLCVLATTDRRRRDLGGSGPLAIGLSVALGHLLAIDYTGCGINPARSFGSSVITHNFKDHWIFWVGPFIGGALAVLIYDFILAPRSSDLTDRVKVWTSGQVEEYELDGDDINSRVEMKPK.

Residues 1-11 (MASEFKKKLFW) lie on the Cytoplasmic side of the membrane. A helical transmembrane segment spans residues 12 to 29 (RAVVAEFLAMILFVFISI). The Extracellular portion of the chain corresponds to 30–48 (GSALGFNYPVRNNQTAGAA). The N-linked (GlcNAc...) asparagine glycan is linked to Asn-42. Residues 49 to 67 (QDNVKVSLAFGLSIATLAQ) form a helical membrane-spanning segment. Residues 68-70 (SVG) lie on the Cytoplasmic side of the membrane. The stretch at 71–84 (HISGAHLNPAVTLG) is an intramembrane region. Residues 78–80 (NPA) carry the NPA 1 motif. The Cytoplasmic segment spans residues 85 to 92 (LLLSCQIS). Residues 93-111 (ILRAVMYIIAQCVGAIVAT) traverse the membrane as a helical segment. Topologically, residues 112 to 135 (AILSGITSSLPDNSLGRNELAPGV) are extracellular. Residues 136-155 (NSGQGLGIEIIGTLQLVLCV) traverse the membrane as a helical segment. At 156 to 165 (LATTDRRRRD) the chain is on the cytoplasmic side. Residues 166 to 183 (LGGSGPLAIGLSVALGHL) traverse the membrane as a helical segment. At 184 to 188 (LAIDY) the chain is on the extracellular side. The stretch at 189-201 (TGCGINPARSFGS) is an intramembrane region. The short motif at 194–196 (NPA) is the NPA 2 element. The Extracellular portion of the chain corresponds to 202-208 (SVITHNF). The chain crosses the membrane as a helical span at residues 209–226 (KDHWIFWVGPFIGGALAV). The Cytoplasmic segment spans residues 227–271 (LIYDFILAPRSSDLTDRVKVWTSGQVEEYELDGDDINSRVEMKPK). At Ser-249 the chain carries Phosphoserine. At Tyr-255 the chain carries Phosphotyrosine. The residue at position 264 (Ser-264) is a Phosphoserine.

It belongs to the MIP/aquaporin (TC 1.A.8) family. Homotetramer; each monomer provides an independent water pore. Component of the ankyrin-1 complex in the erythrocyte, composed of ANK1, RHCE, RHAG, SLC4A1, EPB42, GYPA, GYPB and AQP1. Interacts with EPHB2; involved in endolymph production in the inner ear. Identified in a complex with STOM. Interacts (via the N-terminal) with ANK1 (via ANK 1-5 repeats). Interacts (via the C-terminal) with EPB42.

It is found in the cell membrane. It catalyses the reaction H2O(in) = H2O(out). The enzyme catalyses nitric oxide(out) = nitric oxide(in). It carries out the reaction CO2(out) = CO2(in). The catalysed reaction is glycerol(in) = glycerol(out). It catalyses the reaction H2O2(out) = H2O2(in). The enzyme catalyses K(+)(in) = K(+)(out). It carries out the reaction Na(+)(in) = Na(+)(out). In terms of biological role, forms a water channel that facilitates the transport of water across cell membranes, playing a crucial role in water homeostasis in various tissues. Could also be permeable to small solutes including hydrogen peroxide, glycerol and gases such as amonnia (NH3), nitric oxide (NO) and carbon dioxide (CO2). Recruited to the ankyrin-1 complex, a multiprotein complex of the erythrocyte membrane, it could be part of a CO2 metabolon, linking facilitated diffusion of CO2 across the membrane, anion exchange of Cl(-)/HCO3(-) and interconversion of dissolved CO2 and carbonic acid in the cytosol. In vitro, it shows non-selective gated cation channel activity and may be permeable to cations like K(+) and Na(+) in vivo. This Canis lupus familiaris (Dog) protein is Aquaporin-1.